We begin with the raw amino-acid sequence, 287 residues long: Diaminopimelate epimerase (287 aa).

The substrate site is built by Asn-15 and Asn-66. Cys-75 serves as the catalytic Proton donor. Residues 76 to 77 (GN), Asn-170, Asn-203, and 221 to 222 (ER) contribute to the substrate site. The active-site Proton acceptor is the Cys-230. 231–232 (GT) serves as a coordination point for substrate.

This sequence belongs to the diaminopimelate epimerase family. In terms of assembly, homodimer.

The protein resides in the cytoplasm. The catalysed reaction is (2S,6S)-2,6-diaminopimelate = meso-2,6-diaminopimelate. The protein operates within amino-acid biosynthesis; L-lysine biosynthesis via DAP pathway; DL-2,6-diaminopimelate from LL-2,6-diaminopimelate: step 1/1. In terms of biological role, catalyzes the stereoinversion of LL-2,6-diaminopimelate (L,L-DAP) to meso-diaminopimelate (meso-DAP), a precursor of L-lysine and an essential component of the bacterial peptidoglycan. This is Diaminopimelate epimerase from Desulfovibrio desulfuricans (strain ATCC 27774 / DSM 6949 / MB).